The chain runs to 247 residues: LOB domain-containing protein 38 (247 aa).

Positions 1–107 (MSCNGCRVLR…VETVLRGGSL (107 aa)) constitute an LOB domain. The span at 157–170 (FSSSRSRSRSTASP) shows a compositional bias: low complexity. The disordered stretch occupies residues 157 to 184 (FSSSRSRSRSTASPPKRKRLSSEQQPSS).

It belongs to the LOB domain-containing protein family. In terms of tissue distribution, expressed in young shoots, roots, stems, leaves and flowers.

This is LOB domain-containing protein 38 (LBD38) from Arabidopsis thaliana (Mouse-ear cress).